The chain runs to 229 residues: Elongation factor 1-delta 1 (229 aa).

The disordered stretch occupies residues 80 to 109 (ESTAVPSASTPDVADAKAPAADDDDDDDVD). The span at 100–109 (ADDDDDDDVD) shows a compositional bias: acidic residues.

The protein belongs to the EF-1-beta/EF-1-delta family. EF-1 is composed of 4 subunits: alpha, beta (1B-alpha=beta'), delta (1B-beta), and gamma (1B-gamma).

In terms of biological role, EF-1-beta and EF-1-beta' stimulate the exchange of GDP bound to EF-1-alpha to GTP. This Oryza sativa subsp. japonica (Rice) protein is Elongation factor 1-delta 1.